Here is a 612-residue protein sequence, read N- to C-terminus: 1,8-cineole synthase, chloroplastic (612 aa).

Residues 1 to 52 (MALVCGAPLASRSCLNKSLISSTHELKPLRRTILPTLRWKSATPSINMCLTT) constitute a chloroplast transit peptide. Residues D363, D367, and D515 each coordinate Mg(2+). A DDXXD motif motif is present at residues 363-367 (DDIYD).

It belongs to the terpene synthase family. Tpsd subfamily. Requires Mg(2+) as cofactor. Mn(2+) is required as a cofactor.

Its subcellular location is the plastid. The protein resides in the chloroplast. The enzyme catalyses (2E)-geranyl diphosphate + H2O = 1,8-cineole + diphosphate. Its pathway is terpene metabolism; oleoresin biosynthesis. In terms of biological role, terpene synthase (TPS) involved in the biosynthesis of monoterpene natural products included in conifer oleoresin secretions and volatile emissions; these compounds contribute to biotic and abiotic stress defense against herbivores and pathogens. Catalyzes the conversion of (2E)-geranyl diphosphate (GPP) to 1,8-cineole. This chain is 1,8-cineole synthase, chloroplastic, found in Picea glauca (White spruce).